A 155-amino-acid chain; its full sequence is Interleukin-2 (155 aa).

Positions 1 to 20 are cleaved as a signal peptide; it reads MYKIQLLSCIALTLALVANG. The O-linked (GalNAc...) threonine glycan is linked to T23. A disulfide bond links C79 and C127.

It belongs to the IL-2 family.

The protein localises to the secreted. Cytokine produced by activated CD4-positive helper T-cells and to a lesser extend activated CD8-positive T-cells and natural killer (NK) cells that plays pivotal roles in the immune response and tolerance. Binds to a receptor complex composed of either the high-affinity trimeric IL-2R (IL2RA/CD25, IL2RB/CD122 and IL2RG/CD132) or the low-affinity dimeric IL-2R (IL2RB and IL2RG). Interaction with the receptor leads to oligomerization and conformation changes in the IL-2R subunits resulting in downstream signaling starting with phosphorylation of JAK1 and JAK3. In turn, JAK1 and JAK3 phosphorylate the receptor to form a docking site leading to the phosphorylation of several substrates including STAT5. This process leads to activation of several pathways including STAT, phosphoinositide-3-kinase/PI3K and mitogen-activated protein kinase/MAPK pathways. Functions as a T-cell growth factor and can increase NK-cell cytolytic activity as well. Promotes strong proliferation of activated B-cells and subsequently immunoglobulin production. Plays a pivotal role in regulating the adaptive immune system by controlling the survival and proliferation of regulatory T-cells, which are required for the maintenance of immune tolerance. Moreover, participates in the differentiation and homeostasis of effector T-cell subsets, including Th1, Th2, Th17 as well as memory CD8-positive T-cells. This chain is Interleukin-2 (IL2), found in Bos taurus (Bovine).